The following is a 188-amino-acid chain: Molybdopterin synthase catalytic subunit (188 aa).

Serine 20 carries the post-translational modification Phosphoserine. Residues 143 to 144 (HR), lysine 159, and 166 to 168 (KKE) each bind substrate.

It belongs to the MoaE family. MOCS2B subfamily. Heterotetramer; composed of 2 small (MOCS2A) and 2 large (MOCS2B) subunits. In terms of tissue distribution, highest levels are found in heart and skeletal muscle. Lower levels are present in brain, kidney and pancreas. Very low levels are found in lung and peripheral blood leukocytes.

It is found in the cytoplasm. It localises to the cytosol. The enzyme catalyses 2 [molybdopterin-synthase sulfur-carrier protein]-C-terminal-Gly-aminoethanethioate + cyclic pyranopterin phosphate + H2O = molybdopterin + 2 [molybdopterin-synthase sulfur-carrier protein]-C-terminal Gly-Gly + 2 H(+). It functions in the pathway cofactor biosynthesis; molybdopterin biosynthesis. In terms of biological role, catalytic subunit of the molybdopterin synthase complex, a complex that catalyzes the conversion of precursor Z into molybdopterin. Acts by mediating the incorporation of 2 sulfur atoms from thiocarboxylated MOCS2A into precursor Z to generate a dithiolene group. The polypeptide is Molybdopterin synthase catalytic subunit (Homo sapiens (Human)).